Consider the following 493-residue polypeptide: Endoglucanase 23 (493 aa).

A signal peptide spans 1–23; the sequence is MKASIYLVTVFILLLLLLPTAIP. The active-site Nucleophile is D78. N-linked (GlcNAc...) asparagine glycosylation is present at N297. H410 is a catalytic residue. N465 is a glycosylation site (N-linked (GlcNAc...) asparagine). The active site involves E470.

This sequence belongs to the glycosyl hydrolase 9 (cellulase E) family.

Its subcellular location is the secreted. It carries out the reaction Endohydrolysis of (1-&gt;4)-beta-D-glucosidic linkages in cellulose, lichenin and cereal beta-D-glucans.. The polypeptide is Endoglucanase 23 (Arabidopsis thaliana (Mouse-ear cress)).